Here is a 154-residue protein sequence, read N- to C-terminus: Ribonuclease H (154 aa).

The 142-residue stretch at 1–142 folds into the RNase H type-1 domain; it reads MKQVDIFTDG…CDTIARGHAS (142 aa). The Mg(2+) site is built by Asp-9, Glu-47, Asp-69, and Asp-134.

The protein belongs to the RNase H family. Monomer. It depends on Mg(2+) as a cofactor.

The protein localises to the cytoplasm. The enzyme catalyses Endonucleolytic cleavage to 5'-phosphomonoester.. In terms of biological role, endonuclease that specifically degrades the RNA of RNA-DNA hybrids. This is Ribonuclease H from Oleidesulfovibrio alaskensis (strain ATCC BAA-1058 / DSM 17464 / G20) (Desulfovibrio alaskensis).